The following is a 418-amino-acid chain: E3 ubiquitin-protein ligase pellino homolog 1 (418 aa).

Residues 13-200 form the FHA; atypical domain; it reads APVKYGELIV…MHPRNGFTED (188 aa). Residue Ser121 is modified to Phosphoserine. At Thr127 the chain carries Phosphothreonine. The ring-like domain; necessary for ubiquitination of RIPK3 stretch occupies residues 311–399; it reads CGHVHGYHNW…TFHAACPFCA (89 aa).

The protein belongs to the pellino family. Interacts with MAP3K7. Upon IL1B treatment, forms a complex with TRAF6, IRAK1, IRAK4 and MYD88; this complex recruits MAP3K7/TAK1, TAB1 and TAB2 to mediate NF-kappa-B activation. Direct binding of SMAD6 to PELI1 prevents the complex formation and hence negatively regulates IL1R-TLR signaling and eventually NF-kappa-B-mediated gene expression. Interacts (via atypical FHA domain) with RIPK3. Binds preferentially to the 'Thr-182' phosphorylated form of RIPK3. Interacts with RIPK1. Post-translationally, phosphorylation by IRAK1 and IRAK4 enhances its E3 ligase activity. Phosphorylated by ATM in response to DNA damage, promoting localization to DNA double-strand breaks (DSBs) and ability to mediate 'Lys-63'-linked ubiquitination of NBN. In terms of processing, sumoylated.

The protein resides in the chromosome. The catalysed reaction is S-ubiquitinyl-[E2 ubiquitin-conjugating enzyme]-L-cysteine + [acceptor protein]-L-lysine = [E2 ubiquitin-conjugating enzyme]-L-cysteine + N(6)-ubiquitinyl-[acceptor protein]-L-lysine.. Its pathway is protein modification; protein ubiquitination. E3 ubiquitin ligase catalyzing the covalent attachment of ubiquitin moieties onto substrate proteins. Involved in the TLR and IL-1 signaling pathways via interaction with the complex containing IRAK kinases and TRAF6. Acts as a positive regulator of inflammatory response in microglia through activation of NF-kappa-B and MAP kinase. Mediates 'Lys-63'-linked polyubiquitination of IRAK1 allowing subsequent NF-kappa-B activation. Conjugates 'Lys-63'-linked ubiquitin chains to the adapter protein ASC/PYCARD, which in turn is crucial for NLRP3 inflammasome activation. Mediates 'Lys-48'-linked polyubiquitination of RIPK3 leading to its subsequent proteasome-dependent degradation; preferentially recognizes and mediates the degradation of the 'Thr-182' phosphorylated form of RIPK3. Negatively regulates necroptosis by reducing RIPK3 expression. Mediates 'Lys-63'-linked ubiquitination of RIPK1. Following phosphorylation by ATM, catalyzes 'Lys-63'-linked ubiquitination of NBN, promoting DNA repair via homologous recombination. Negatively regulates activation of the metabolic mTORC1 signaling pathway by mediating 'Lys-63'-linked ubiquitination of mTORC1-inhibitory protein TSC1 and thereby promoting TSC1/TSC2 complex stability. The chain is E3 ubiquitin-protein ligase pellino homolog 1 (Peli1) from Mus musculus (Mouse).